We begin with the raw amino-acid sequence, 255 residues long: 5'-nucleotidase SurE (255 aa).

A divalent metal cation is bound by residues Asp-8, Asp-9, Ser-40, and Asn-92.

It belongs to the SurE nucleotidase family. Requires a divalent metal cation as cofactor.

It is found in the cytoplasm. It carries out the reaction a ribonucleoside 5'-phosphate + H2O = a ribonucleoside + phosphate. In terms of biological role, nucleotidase that shows phosphatase activity on nucleoside 5'-monophosphates. This chain is 5'-nucleotidase SurE, found in Brucella abortus (strain S19).